Here is a 393-residue protein sequence, read N- to C-terminus: Cysteine protease ATG4B (393 aa).

Met-1 is modified (N-acetylmethionine). Residue Ser-34 is modified to Phosphoserine. Catalysis depends on Cys-74, which acts as the Nucleophile. S-nitrosocysteine is present on Cys-189. Catalysis depends on residues Asp-278 and His-280. Cys-292 and Cys-301 each carry S-nitrosocysteine. Cys-292 and Cys-361 are disulfide-bonded. Residues Ser-316 and Ser-383 each carry the phosphoserine modification. An LIR motif is present at residues 388–391 (FEIL). Position 392 is a phosphoserine (Ser-392).

This sequence belongs to the peptidase C54 family. As to quaternary structure, interacts with PFKP; promoting phosphorylation of ATG4B at Ser-34. Interacts with GBP7. In terms of processing, phosphorylation at Ser-383 and Ser-392 promotes autophagy by increasing protein delipidation activity without affecting proteolytic activation of ATG8 proteins. Phosphorylation at Ser-316 by ULK1 inhibits autophagy by decreasing both proteolytic activation and delipidation activities. Phosphorylation at Ser-316 is dephosphorylated by protein phosphatase 2A (PP2A). Phosphorylation at Ser-34 by AKT2 promotes its hydrolase activity, leading to increased proteolytic activation and delipidation of ATG8 family proteins. Phosphorylation at Ser-34 by AKT1 promotes mitochondrial localization and inhibition of the F1F0-ATP synthase activity, leading to elevation of mitochondrial reactive oxygen species (ROS). Ubiquitinated by RNF5, leading to its degradation by the proteasome. Post-translationally, S-nitrosylation at Cys-189 and Cys-292 in response to high glucose decreases both proteolytic activation and delipidation activities. In terms of processing, O-glycosylated by OGT, leading to increase protease activity, thereby promoting the proteolytic activation of ATG8 family proteins. Forms reversible intrachain disulfide bonds in response to oxidative stress. Forms interchain disulfide bonds, leading to formation of homooligomers in response to oxidation.

Its subcellular location is the cytoplasm. It localises to the cytosol. The protein resides in the cytoplasmic vesicle. The protein localises to the autophagosome. It is found in the endoplasmic reticulum. Its subcellular location is the mitochondrion. The catalysed reaction is [protein]-C-terminal L-amino acid-glycyl-phosphatidylethanolamide + H2O = [protein]-C-terminal L-amino acid-glycine + a 1,2-diacyl-sn-glycero-3-phosphoethanolamine. It carries out the reaction [protein]-C-terminal L-amino acid-glycyl-phosphatidylserine + H2O = [protein]-C-terminal L-amino acid-glycine + a 1,2-diacyl-sn-glycero-3-phospho-L-serine. With respect to regulation, inhibited by N-ethylmaleimide. Redox-regulated during autophagy since reducing conditions activate ATG4A whereas an oxidizing environment such as the presence of H(2)O(2) inhibits its activity. The cysteine protease activity compounds is inhibited by styrylquinoline compounds 4-28 and LV-320. Functionally, cysteine protease that plays a key role in autophagy by mediating both proteolytic activation and delipidation of ATG8 family proteins. Required for canonical autophagy (macroautophagy), non-canonical autophagy as well as for mitophagy. The protease activity is required for proteolytic activation of ATG8 family proteins: cleaves the C-terminal amino acid of ATG8 proteins MAP1LC3A, MAP1LC3B, MAP1LC3C, GABARAPL1, GABARAPL2 and GABARAP, to reveal a C-terminal glycine. Exposure of the glycine at the C-terminus is essential for ATG8 proteins conjugation to phosphatidylethanolamine (PE) and insertion to membranes, which is necessary for autophagy. Protease activity is also required to counteract formation of high-molecular weight conjugates of ATG8 proteins (ATG8ylation): acts as a deubiquitinating-like enzyme that removes ATG8 conjugated to other proteins, such as ATG3. In addition to the protease activity, also mediates delipidation of ATG8 family proteins. Catalyzes delipidation of PE-conjugated forms of ATG8 proteins during macroautophagy. Also involved in non-canonical autophagy, a parallel pathway involving conjugation of ATG8 proteins to single membranes at endolysosomal compartments, by catalyzing delipidation of ATG8 proteins conjugated to phosphatidylserine (PS). Compared to other members of the family (ATG4A, ATG4C or ATG4C), constitutes the major protein for proteolytic activation of ATG8 proteins, while it displays weaker delipidation activity than other ATG4 paralogs. Involved in phagophore growth during mitophagy independently of its protease activity and of ATG8 proteins: acts by regulating ATG9A trafficking to mitochondria and promoting phagophore-endoplasmic reticulum contacts during the lipid transfer phase of mitophagy. In Mus musculus (Mouse), this protein is Cysteine protease ATG4B.